The chain runs to 350 residues: NAD-dependent protein deacetylase sirtuin-2 (350 aa).

A Nuclear export signal motif is present at residues 4-14; that stretch reads LRNLFTQTLGL. Serine 16 carries the post-translational modification Phosphoserine. One can recognise a Deacetylase sirtuin-type domain in the interval 20 to 301; it reads RLLDELTLEG…LALADLLGWK (282 aa). NAD(+) is bound by residues 48–52 and 58–60; these read AGIST and DFR. Serine 63 bears the Phosphoserine mark. An NAD(+)-binding site is contributed by 130–133; it reads QNID. The active-site Proton acceptor is histidine 150. The Zn(2+) site is built by cysteine 158 and cysteine 163. Serine 170 carries the phosphoserine modification. Zn(2+)-binding residues include cysteine 184 and cysteine 187. NAD(+) contacts are provided by residues 225–226, 249–251, and cysteine 287; these read TS and NKE. A disordered region spans residues 312–350; that stretch reads ANIDAQSGSQASNPSATVSPRKSPPPAKEAARTKEKEEH. A compositionally biased stretch (polar residues) spans 315 to 331; sequence DAQSGSQASNPSATVSP. A phosphoserine mark is found at serine 330 and serine 334. Positions 340–350 are enriched in basic and acidic residues; that stretch reads EAARTKEKEEH.

The protein belongs to the sirtuin family. Class I subfamily. As to quaternary structure, interacts with CDC20, FOXO3 and FZR1. Associates with microtubules in primary cortical mature neurons. Homotrimer. Interacts (via both phosphorylated, unphosphorylated, active or inactive forms) with HDAC6; the interaction is necessary for the complex to interact with alpha-tubulin, suggesting that these proteins belong to a large complex that deacetylates the cytoskeleton. Interacts with FOXO1; the interaction is disrupted upon serum-starvation or oxidative stress, leading to increased level of acetylated FOXO1 and induction of autophagy. Interacts with RELA; the interaction occurs in the cytoplasm and is increased in a TNF-alpha-dependent manner. Interacts with HOXA10; the interaction is direct. Interacts with YWHAB and YWHAG; the interactions occur in a AKT-dependent manner and increase SIRT2-dependent TP53 deacetylation. Interacts with MAPK1/ERK2 and MAPK3/ERK1; the interactions increase SIRT2 stability and deacetylation activity. Interacts (phosphorylated form) with KMT5A isoform 2; the interaction is direct, stimulates KMT5A-mediated methyltransferase activity on histone at 'Lys-20' (H4K20me1) and is increased in a H(2)O(2)-induced oxidative stress-dependent manner. Interacts with G6PD; the interaction is enhanced by H(2)O(2) treatment. Interacts with a G1/S-specific cyclin E-CDK2 complex. Interacts with AURKA, CDK5R1 (p35 form) and CDK5 and HIF1A. Interacts with the tRNA ligase SARS1; recruited to the VEGFA promoter via interaction with SARS1. Interacts with BEX4; negatively regulates alpha-tubulin deacetylation by SIRT2. It depends on Zn(2+) as a cofactor. Post-translationally, phosphorylated at phosphoserine and phosphothreonine. Phosphorylated at Ser-330 by a mitotic kinase CDK1/cyclin B at the G2/M transition; phosphorylation regulates the delay in cell-cycle progression. Phosphorylated at Ser-330 by a mitotic kinase G1/S-specific cyclin E/Cdk2 complex; phosphorylation inactivates SIRT2-mediated alpha-tubulin deacetylation and thereby negatively regulates cell adhesion, cell migration and neurite outgrowth during neuronal differentiation. Phosphorylated by cyclin A/Cdk2 and p35-Cdk5 complexes and to a lesser extent by the cyclin D3/Cdk4 and cyclin B/Cdk1, in vitro. Dephosphorylated at Ser-330 by CDC14A and CDC14B around early anaphase. Acetylated by EP300; acetylation leads both to the decreased of SIRT2-mediated alpha-tubulin deacetylase activity and SIRT2-mediated down-regulation of TP53 transcriptional activity. In terms of processing, ubiquitinated. As to expression, expressed in the cerebellum, cerebral cortex and cervival spinal cord. Expressed in Purkinje cells, oligodendrocytes and Schwann cells (at protein level). Expressed in the central nervous system (CNS).

It is found in the nucleus. The protein localises to the cytoplasm. It localises to the perinuclear region. Its subcellular location is the cytoskeleton. The protein resides in the microtubule organizing center. It is found in the centrosome. The protein localises to the centriole. It localises to the spindle. Its subcellular location is the midbody. The protein resides in the chromosome. It is found in the perikaryon. The protein localises to the cell projection. It localises to the growth cone. Its subcellular location is the myelin membrane. It catalyses the reaction N(6)-acetyl-L-lysyl-[protein] + NAD(+) + H2O = 2''-O-acetyl-ADP-D-ribose + nicotinamide + L-lysyl-[protein]. It carries out the reaction N(6)-tetradecanoyl-L-lysyl-[protein] + NAD(+) + H2O = 2''-O-tetradecanoyl-ADP-D-ribose + nicotinamide + L-lysyl-[protein]. The enzyme catalyses N(6)-hexadecanoyl-L-lysyl-[protein] + NAD(+) + H2O = 2''-O-hexadecanoyl-ADP-D-ribose + nicotinamide + L-lysyl-[protein]. With respect to regulation, inhibited by Sirtinol, A3 and M15 small molecules. Inhibited by nicotinamide. Inhibited by a macrocyclic peptide inhibitor S2iL5. Inhibited by EP300-induced acetylation. NAD-dependent protein deacetylase, which deacetylates internal lysines on histone and alpha-tubulin as well as many other proteins such as key transcription factors. Participates in the modulation of multiple and diverse biological processes such as cell cycle control, genomic integrity, microtubule dynamics, cell differentiation, metabolic networks, and autophagy. Plays a major role in the control of cell cycle progression and genomic stability. Functions in the antephase checkpoint preventing precocious mitotic entry in response to microtubule stress agents, and hence allowing proper inheritance of chromosomes. Positively regulates the anaphase promoting complex/cyclosome (APC/C) ubiquitin ligase complex activity by deacetylating CDC20 and FZR1, then allowing progression through mitosis. Associates both with chromatin at transcriptional start sites (TSSs) and enhancers of active genes. Plays a role in cell cycle and chromatin compaction through epigenetic modulation of the regulation of histone H4 'Lys-20' methylation (H4K20me1) during early mitosis. Specifically deacetylates histone H4 at 'Lys-16' (H4K16ac) between the G2/M transition and metaphase enabling H4K20me1 deposition by KMT5A leading to ulterior levels of H4K20me2 and H4K20me3 deposition throughout cell cycle, and mitotic S-phase progression. Deacetylates KMT5A modulating KMT5A chromatin localization during the mitotic stress response. Also deacetylates histone H3 at 'Lys-57' (H3K56ac) during the mitotic G2/M transition. During oocyte meiosis progression, may deacetylate histone H4 at 'Lys-16' (H4K16ac) and alpha-tubulin, regulating spindle assembly and chromosome alignment by influencing microtubule dynamics and kinetochore function. Deacetylates histone H4 at 'Lys-16' (H4K16ac) at the VEGFA promoter and thereby contributes to regulate expression of VEGFA, a key regulator of angiogenesis. Deacetylates alpha-tubulin at 'Lys-40' and hence controls neuronal motility, oligodendroglial cell arbor projection processes and proliferation of non-neuronal cells. Phosphorylation at Ser-368 by a G1/S-specific cyclin E-CDK2 complex inactivates SIRT2-mediated alpha-tubulin deacetylation, negatively regulating cell adhesion, cell migration and neurite outgrowth during neuronal differentiation. Deacetylates PARD3 and participates in the regulation of Schwann cell peripheral myelination formation during early postnatal development and during postinjury remyelination. Involved in several cellular metabolic pathways. Plays a role in the regulation of blood glucose homeostasis by deacetylating and stabilizing phosphoenolpyruvate carboxykinase PCK1 activity in response to low nutrient availability. Acts as a key regulator in the pentose phosphate pathway (PPP) by deacetylating and activating the glucose-6-phosphate G6PD enzyme, and therefore, stimulates the production of cytosolic NADPH to counteract oxidative damage. Maintains energy homeostasis in response to nutrient deprivation as well as energy expenditure by inhibiting adipogenesis and promoting lipolysis. Attenuates adipocyte differentiation by deacetylating and promoting FOXO1 interaction to PPARG and subsequent repression of PPARG-dependent transcriptional activity. Plays a role in the regulation of lysosome-mediated degradation of protein aggregates by autophagy in neuronal cells. Deacetylates FOXO1 in response to oxidative stress or serum deprivation, thereby negatively regulating FOXO1-mediated autophagy. Deacetylates a broad range of transcription factors and co-regulators regulating target gene expression. Deacetylates transcriptional factor FOXO3 stimulating the ubiquitin ligase SCF(SKP2)-mediated FOXO3 ubiquitination and degradation. Deacetylates HIF1A and therefore promotes HIF1A degradation and inhibition of HIF1A transcriptional activity in tumor cells in response to hypoxia. Deacetylates RELA in the cytoplasm inhibiting NF-kappaB-dependent transcription activation upon TNF-alpha stimulation. Inhibits transcriptional activation by deacetylating p53/TP53 and EP300. Also deacetylates EIF5A. Functions as a negative regulator on oxidative stress-tolerance in response to anoxia-reoxygenation conditions. Plays a role as tumor suppressor. In addition to protein deacetylase activity, also has activity toward long-chain fatty acyl groups and mediates protein-lysine demyristoylation and depalmitoylation of target proteins, such as ARF6 and KRAS, thereby regulating their association with membranes. This Rattus norvegicus (Rat) protein is NAD-dependent protein deacetylase sirtuin-2 (Sirt2).